The following is a 127-amino-acid chain: Aspartate 1-decarboxylase (127 aa).

Serine 25 acts as the Schiff-base intermediate with substrate; via pyruvic acid in catalysis. Serine 25 bears the Pyruvic acid (Ser) mark. Substrate is bound at residue threonine 57. Catalysis depends on tyrosine 58, which acts as the Proton donor. Residue 73–75 participates in substrate binding; that stretch reads GSA.

Belongs to the PanD family. Heterooctamer of four alpha and four beta subunits. Pyruvate serves as cofactor. In terms of processing, is synthesized initially as an inactive proenzyme, which is activated by self-cleavage at a specific serine bond to produce a beta-subunit with a hydroxyl group at its C-terminus and an alpha-subunit with a pyruvoyl group at its N-terminus.

The protein resides in the cytoplasm. The catalysed reaction is L-aspartate + H(+) = beta-alanine + CO2. Its pathway is cofactor biosynthesis; (R)-pantothenate biosynthesis; beta-alanine from L-aspartate: step 1/1. Its function is as follows. Catalyzes the pyruvoyl-dependent decarboxylation of aspartate to produce beta-alanine. This chain is Aspartate 1-decarboxylase, found in Dechloromonas aromatica (strain RCB).